A 271-amino-acid chain; its full sequence is Tritrans,polycis-undecaprenyl-diphosphate synthase (geranylgeranyl-diphosphate specific) (271 aa).

The active site involves Asp-50. Residue Asp-50 coordinates Mg(2+). Residues 51 to 54 (GNRR), Phe-55, His-67, and 95 to 97 (STE) contribute to the substrate site. Asn-98 functions as the Proton acceptor in the catalytic mechanism. Substrate-binding positions include Arg-101, Arg-220, and 226–228 (RLS). Residue Glu-239 participates in Mg(2+) binding.

This sequence belongs to the UPP synthase family. In terms of assembly, homodimer. Mg(2+) serves as cofactor.

The enzyme catalyses geranylgeranyl diphosphate + 7 isopentenyl diphosphate = tri-trans,hepta-cis-undecaprenyl diphosphate + 7 diphosphate. Its function is as follows. Catalyzes the sequential condensation of isopentenyl diphosphate (IPP) with geranylgeranyl diphosphate (GGPP) to yield (2Z,6Z,10Z,14Z,18Z,22Z,26Z,30E,34E,38E)-undecaprenyl diphosphate (tritrans,heptacis-UPP). It is probably the precursor of glycosyl carrier lipids. The polypeptide is Tritrans,polycis-undecaprenyl-diphosphate synthase (geranylgeranyl-diphosphate specific) (Methanopyrus kandleri (strain AV19 / DSM 6324 / JCM 9639 / NBRC 100938)).